The sequence spans 61 residues: Metallothionein-II, hippocampal (61 aa).

At M1 the chain carries N-acetylmethionine. Positions 1-29 (MDPNCSCATGGSCTCANSCTCKACKCASC) are beta. The a divalent metal cation site is built by C5, C7, C13, C15, C19, C21, C24, C26, C29, C33, C34, C36, C37, C41, C44, C48, C50, C57, C59, and C60. The tract at residues 30-61 (KKSCCSCCPVGCAKCAQGCICKGASDKCSCCA) is alpha.

The protein belongs to the metallothionein superfamily. Type 1 family.

Its function is as follows. Metallothioneins have a high content of cysteine residues that bind various heavy metals; these proteins are transcriptionally regulated by both heavy metals and glucocorticoids. This isoform may play a role in regulating the transport, accumulation, and compartmentation of zinc in the hippocampus. The protein is Metallothionein-II, hippocampal of Bos taurus (Bovine).